Reading from the N-terminus, the 433-residue chain is Agnestins efflux protein AgnL12 (433 aa).

Composition is skewed to polar residues over residues 1-10 and 25-40; these read MSRSTSTELQ and SIAS…PPST. A disordered region spans residues 1-40; sequence MSRSTSTELQQELPASKEVPPDPTSIASSETASGSKPPST. The next 12 membrane-spanning stretches (helical) occupy residues 47–67, 87–107, 116–136, 141–161, 174–194, 205–225, 248–268, 285–305, 309–329, 335–355, 370–390, and 401–421; these read ILVL…TNAF, ISWI…ISGY, LLIC…SLST, IFLT…LPAM, LAMG…PIAL, WTVR…CLAI, VMIF…SPFF, FYMV…PGLI, VGNY…ACCW, VGGI…VISL, GVAM…GTPI, and LGLS…ILLA.

It belongs to the major facilitator superfamily. Monocarboxylate porter (TC 2.A.1.13) family.

The protein localises to the cell membrane. Its function is as follows. Efflux pump that may be involved in the secretion of agnestins, dihydroxy-xanthone metabolites. In Paecilomyces divaricatus (Penicillium divaricatum), this protein is Agnestins efflux protein AgnL12.